Consider the following 98-residue polypeptide: NADH-ubiquinone oxidoreductase chain 4L (98 aa).

Helical transmembrane passes span 1 to 21 (MPIIYMNIMLSFIISLLGMLI), 29 to 49 (SLLCLEGMMLSLFIMSTLMAL), and 58 to 78 (IVPVALLVFAACEAAVGLALL).

Belongs to the complex I subunit 4L family. As to quaternary structure, core subunit of respiratory chain NADH dehydrogenase (Complex I) which is composed of 45 different subunits.

It is found in the mitochondrion inner membrane. The enzyme catalyses a ubiquinone + NADH + 5 H(+)(in) = a ubiquinol + NAD(+) + 4 H(+)(out). Its function is as follows. Core subunit of the mitochondrial membrane respiratory chain NADH dehydrogenase (Complex I) which catalyzes electron transfer from NADH through the respiratory chain, using ubiquinone as an electron acceptor. Part of the enzyme membrane arm which is embedded in the lipid bilayer and involved in proton translocation. The sequence is that of NADH-ubiquinone oxidoreductase chain 4L (MT-ND4L) from Semnopithecus entellus (Northern plains gray langur).